We begin with the raw amino-acid sequence, 173 residues long: Crossover junction endodeoxyribonuclease RuvC (173 aa).

Catalysis depends on residues aspartate 8, glutamate 69, and aspartate 141. Mg(2+) contacts are provided by aspartate 8, glutamate 69, and aspartate 141.

It belongs to the RuvC family. Homodimer which binds Holliday junction (HJ) DNA. The HJ becomes 2-fold symmetrical on binding to RuvC with unstacked arms; it has a different conformation from HJ DNA in complex with RuvA. In the full resolvosome a probable DNA-RuvA(4)-RuvB(12)-RuvC(2) complex forms which resolves the HJ. Mg(2+) serves as cofactor.

The protein resides in the cytoplasm. It carries out the reaction Endonucleolytic cleavage at a junction such as a reciprocal single-stranded crossover between two homologous DNA duplexes (Holliday junction).. Functionally, the RuvA-RuvB-RuvC complex processes Holliday junction (HJ) DNA during genetic recombination and DNA repair. Endonuclease that resolves HJ intermediates. Cleaves cruciform DNA by making single-stranded nicks across the HJ at symmetrical positions within the homologous arms, yielding a 5'-phosphate and a 3'-hydroxyl group; requires a central core of homology in the junction. The consensus cleavage sequence is 5'-(A/T)TT(C/G)-3'. Cleavage occurs on the 3'-side of the TT dinucleotide at the point of strand exchange. HJ branch migration catalyzed by RuvA-RuvB allows RuvC to scan DNA until it finds its consensus sequence, where it cleaves and resolves the cruciform DNA. This is Crossover junction endodeoxyribonuclease RuvC from Xylella fastidiosa (strain Temecula1 / ATCC 700964).